Consider the following 472-residue polypeptide: Putative F-box/LRR-repeat protein At5g54820 (472 aa).

One can recognise an F-box domain in the interval 6-54; sequence QDRLSSLPDILLIMIISFLPLKECVRTSVLSKRWRYLCLETTNLSFKES. LRR repeat units follow at residues 58–87, 135–164, 183–208, 225–250, 283–308, and 338–363; these read NPDI…SITQ, NGDI…KIYG, IGWV…SIKN, VIEH…KYSG, SSRI…TVCP, and MHTK…GFDI.

The polypeptide is Putative F-box/LRR-repeat protein At5g54820 (Arabidopsis thaliana (Mouse-ear cress)).